A 445-amino-acid polypeptide reads, in one-letter code: C-terminal-binding protein 2 (445 aa).

R22 bears the Asymmetric dimethylarginine mark. Residues S106, 186–191, D210, 243–249, 270–272, and D296 each bind NAD(+); these read IGFGRT, CNLNEHN, and AAR. R272 is an active-site residue. Residue E301 is part of the active site. The active-site Proton donor is H321. 321–324 provides a ligand contact to NAD(+); it reads HTAW. The segment at 414-445 is disordered; that stretch reads THNLPTVAHPSQAPSPNQPTKHGDNREHPNEQ. A Phosphoserine modification is found at S428. The segment covering 434–445 has biased composition (basic and acidic residues); that stretch reads KHGDNREHPNEQ.

This sequence belongs to the D-isomer specific 2-hydroxyacid dehydrogenase family. Can form homodimers or heterodimers of CTBP1 and CTBP2. Interacts with HIPK2 and ZNF217. Interacts with PRDM16; represses white adipose tissue (WAT)-specific genes expression. Interacts with PNN, NRIP1 and WIZ. Interacts with MCRIP1. In terms of assembly, (Microbial infection) Interacts with human adenovirus 5 E1A protein; this interaction seems to potentiate viral replication. As to expression, ubiquitous. Highest levels in heart, skeletal muscle, and pancreas.

The protein resides in the nucleus. It localises to the synapse. Its function is as follows. Corepressor targeting diverse transcription regulators. Functions in brown adipose tissue (BAT) differentiation. In terms of biological role, isoform 2 probably acts as a scaffold for specialized synapses. The protein is C-terminal-binding protein 2 (CTBP2) of Homo sapiens (Human).